The primary structure comprises 431 residues: Glucose-1-phosphate adenylyltransferase (431 aa).

Residues Y109, G175, 190-191 (EK), and S208 each bind alpha-D-glucose 1-phosphate.

This sequence belongs to the bacterial/plant glucose-1-phosphate adenylyltransferase family. As to quaternary structure, homotetramer.

It carries out the reaction alpha-D-glucose 1-phosphate + ATP + H(+) = ADP-alpha-D-glucose + diphosphate. It participates in glycan biosynthesis; glycogen biosynthesis. In terms of biological role, involved in the biosynthesis of ADP-glucose, a building block required for the elongation reactions to produce glycogen. Catalyzes the reaction between ATP and alpha-D-glucose 1-phosphate (G1P) to produce pyrophosphate and ADP-Glc. In Alteromonas mediterranea (strain DSM 17117 / CIP 110805 / LMG 28347 / Deep ecotype), this protein is Glucose-1-phosphate adenylyltransferase.